Here is a 704-residue protein sequence, read N- to C-terminus: Phytyl ester synthase 1, chloroplastic (704 aa).

The N-terminal 27 residues, 1–27, are a transit peptide targeting the chloroplast; sequence MATCSSSLLVLPNLRLSSNQRRNFKVR.

The protein belongs to the diacylglycerol acyltransferase family. Interacts with PGM48. As to expression, mostly expressed in flowers (e.g. sepals, petals and stamen).

It localises to the plastid. It is found in the chloroplast. The protein resides in the plastoglobule. The catalysed reaction is a 1,2-diacyl-3-O-(beta-D-galactosyl)-sn-glycerol + a 1,2-diacylglycerol = an acyl-3-O-(beta-D-galactosyl)-sn-glycerol + a triacylglycerol. The enzyme catalyses a 1,2-diacylglycerol + a fatty acyl-CoA = a triacylglycerol + CoA. It catalyses the reaction a fatty acyl-[ACP] + a 1,2-diacylglycerol = a triacylglycerol + holo-[ACP]. It carries out the reaction phytol + a fatty acyl-CoA = a fatty acid phytyl ester + CoA. The catalysed reaction is phytol + tetradecanoyl-CoA = tetradecanoate phytyl ester + CoA. The enzyme catalyses a 1,3-diacylglycerol + a fatty acyl-CoA = a triacylglycerol + CoA. It catalyses the reaction 1,2-dihexanoylglycerol + tetradecanoyl-CoA = 1,2-dihexanoyl-3-tetradecanoylglycerol + CoA. It carries out the reaction 1,2-dihexanoylglycerol + hexadecanoyl-CoA = 1,2-dihexanoyl-3-hexadecanoylglycerol + CoA. The catalysed reaction is 1,2-dihexanoylglycerol + octadecanoyl-CoA = 1,2-dihexanoyl-3-octadecanoylglycerol + CoA. The enzyme catalyses (7Z,10Z,13Z)-hexadecatrienoyl-CoA + 1,2-dihexanoylglycerol = 1,2-dihexanoyl-3-(7Z,10Z,13Z-hexadecatrienoyl)-glycerol + CoA. It catalyses the reaction 1,2-dihexanoylglycerol + (9Z)-octadecenoyl-CoA = 1,2-dihexanoyl-3-(9Z-octadecenoyl)-glycerol + CoA. It carries out the reaction 1,2-dihexanoylglycerol + (9Z,12Z,15Z)-octadecatrienoyl-CoA = 1,2-dihexanoyl-3-(9Z,12Z,15Z-octadecatrienoyl)-glycerol + CoA. The catalysed reaction is phytol + decanoyl-CoA = decanoate phytyl ester + CoA. The enzyme catalyses (7Z,10Z,13Z)-hexadecatrienoyl-CoA + phytol = (7Z,10Z,13Z)-hexadecatrienoate phytyl ester + CoA. It catalyses the reaction phytol + dodecanoyl-CoA = dodecanoate phytyl ester + CoA. In terms of biological role, acyltransferase involved in fatty acid phytyl ester synthesis in chloroplasts, a process required for the maintenance of the photosynthetic membrane integrity during abiotic stress and senescence. Exhibits phytyl ester synthesis and diacylglycerol acyltransferase activities with broad substrate specificities, and can employ acyl-CoAs, acyl carrier proteins, and galactolipids as acyl donors. This chain is Phytyl ester synthase 1, chloroplastic, found in Arabidopsis thaliana (Mouse-ear cress).